We begin with the raw amino-acid sequence, 299 residues long: Elongation factor Ts (299 aa).

The segment at 82-85 (TDFV) is involved in Mg(2+) ion dislocation from EF-Tu.

The protein belongs to the EF-Ts family.

It localises to the cytoplasm. Functionally, associates with the EF-Tu.GDP complex and induces the exchange of GDP to GTP. It remains bound to the aminoacyl-tRNA.EF-Tu.GTP complex up to the GTP hydrolysis stage on the ribosome. This chain is Elongation factor Ts, found in Dechloromonas aromatica (strain RCB).